A 160-amino-acid chain; its full sequence is Transcription antitermination protein NusB (160 aa).

The protein belongs to the NusB family.

In terms of biological role, involved in transcription antitermination. Required for transcription of ribosomal RNA (rRNA) genes. Binds specifically to the boxA antiterminator sequence of the ribosomal RNA (rrn) operons. The polypeptide is Transcription antitermination protein NusB (Rhizobium rhizogenes (strain K84 / ATCC BAA-868) (Agrobacterium radiobacter)).